The chain runs to 74 residues: Cytochrome c oxidase subunit 6C (74 aa).

Residues 2-12 lie on the Mitochondrial matrix side of the membrane; sequence STALAKPQMRG. Residues 13 to 53 form a helical membrane-spanning segment; the sequence is LLARRLRFHIVGAFMVSLGFATFYKFAVAEKRKKAYADFYR. Residues 54–74 lie on the Mitochondrial intermembrane side of the membrane; the sequence is NYDSMKDFEEMRKAGIFQSAK.

This sequence belongs to the cytochrome c oxidase subunit 6c family. Component of the cytochrome c oxidase (complex IV, CIV), a multisubunit enzyme composed of 14 subunits. The complex is composed of a catalytic core of 3 subunits MT-CO1, MT-CO2 and MT-CO3, encoded in the mitochondrial DNA, and 11 supernumerary subunits COX4I1 (or COX4I2), COX5A, COX5B, COX6A2 (or COX6A1), COX6B1 (or COX6B2), COX6C, COX7A1 (or COX7A2), COX7B, COX7C, COX8B and NDUFA4, which are encoded in the nuclear genome. The complex exists as a monomer or a dimer and forms supercomplexes (SCs) in the inner mitochondrial membrane with NADH-ubiquinone oxidoreductase (complex I, CI) and ubiquinol-cytochrome c oxidoreductase (cytochrome b-c1 complex, complex III, CIII), resulting in different assemblies (supercomplex SCI(1)III(2)IV(1) and megacomplex MCI(2)III(2)IV(2)).

The protein resides in the mitochondrion inner membrane. It participates in energy metabolism; oxidative phosphorylation. Its function is as follows. Component of the cytochrome c oxidase, the last enzyme in the mitochondrial electron transport chain which drives oxidative phosphorylation. The respiratory chain contains 3 multisubunit complexes succinate dehydrogenase (complex II, CII), ubiquinol-cytochrome c oxidoreductase (cytochrome b-c1 complex, complex III, CIII) and cytochrome c oxidase (complex IV, CIV), that cooperate to transfer electrons derived from NADH and succinate to molecular oxygen, creating an electrochemical gradient over the inner membrane that drives transmembrane transport and the ATP synthase. Cytochrome c oxidase is the component of the respiratory chain that catalyzes the reduction of oxygen to water. Electrons originating from reduced cytochrome c in the intermembrane space (IMS) are transferred via the dinuclear copper A center (CU(A)) of subunit 2 and heme A of subunit 1 to the active site in subunit 1, a binuclear center (BNC) formed by heme A3 and copper B (CU(B)). The BNC reduces molecular oxygen to 2 water molecules using 4 electrons from cytochrome c in the IMS and 4 protons from the mitochondrial matrix. The chain is Cytochrome c oxidase subunit 6C (COX6C) from Bos taurus (Bovine).